Reading from the N-terminus, the 1096-residue chain is Serine-repeat antigen protein 3 (1096 aa).

An N-terminal signal peptide occupies residues 1-21 (MARLSSIVFIICLLLCNNAIS). The tract at residues 28–205 (PSSGGTLSGG…RSPPPQVNNI (178 aa)) is disordered. Over residues 77–97 (NSDSTGDSSLGSTGSNGSQPA) the composition is skewed to low complexity. Asn92 carries N-linked (GlcNAc...) asparagine glycosylation. Basic and acidic residues predominate over residues 102–113 (KEPEPTTPKEPE). Positions 123-147 (VTPQKTAETASGKQVSPTPSENPPS) are enriched in polar residues. Basic and acidic residues predominate over residues 149–161 (DTPKPESSSEKKV). N-linked (GlcNAc...) asparagine glycans are attached at residues Asn204, Asn607, Asn637, Asn662, Asn671, Asn712, Asn892, and Asn951. Disordered regions lie at residues 916 to 952 (EAKN…QANS) and 964 to 1006 (NQRT…ASAN). Polar residues-rich tracts occupy residues 925–952 (QNYG…QANS) and 964–975 (NQRTADSNPNAQ). A compositionally biased stretch (low complexity) spans 976 to 1006 (STPSPNTTVTDTVNSNTANSNTANSNTASAN). N-linked (GlcNAc...) asparagine glycans are attached at residues Asn981 and Asn1039.

This sequence belongs to the peptidase C1 family. Proteolytically cleaved in both blood and liver stage parasites. Precursor of 130 kDa is processed into 72 kDa and 55 kDa forms. Proteolytically cleaved by SUB1.

It is found in the cell membrane. The protein resides in the parasitophorous vacuole. Its subcellular location is the secreted. The protein localises to the host cytoplasm. Putative cysteine protease. Probably involved in merozoite release from the parasitophorous vacuole during liver stages. The chain is Serine-repeat antigen protein 3 from Plasmodium berghei (strain Anka).